Here is a 469-residue protein sequence, read N- to C-terminus: Protein YfjI (469 aa).

The polypeptide is Protein YfjI (yfjI) (Escherichia coli (strain K12)).